The chain runs to 412 residues: Putative competence-damage inducible protein (412 aa).

The protein belongs to the CinA family.

The sequence is that of Putative competence-damage inducible protein from Bacillus cereus (strain AH187).